The chain runs to 506 residues: Cytochrome P450 6a8 (506 aa).

A heme-binding site is contributed by Cys-451.

The protein belongs to the cytochrome P450 family. The cofactor is heme.

The protein resides in the endoplasmic reticulum membrane. The protein localises to the microsome membrane. In terms of biological role, involved in the metabolism of insect hormones and in the breakdown of synthetic insecticides. This is Cytochrome P450 6a8 (Cyp6a8) from Drosophila melanogaster (Fruit fly).